A 112-amino-acid chain; its full sequence is cAMP-regulated phosphoprotein 19 (112 aa).

Residues 1-11 (MSAESPEPASA) are compositionally biased toward low complexity. Positions 1–49 (MSAESPEPASAEEQKEMEDKVLSPEKAEEAKLKARYPHLGQKPGGSDFL) are disordered. Residues 12–32 (EEQKEMEDKVLSPEKAEEAKL) are compositionally biased toward basic and acidic residues. 2 positions are modified to phosphoserine; by GWL: Ser-62 and Ser-104. The disordered stretch occupies residues 72 to 112 (MKNKQLPTAAPDKTEVTGDHIPTPQDLPQRKPSLVASKLAG). Phosphoserine; by PKA is present on Ser-104.

This sequence belongs to the endosulfine family. Interacts (when phosphorylated at Ser-62) with PPP2R2D. Phosphorylation at Ser-62 by MASTL/GWL during mitosis is essential for interaction with PPP2R2D (PR55-delta) and subsequent inactivation of PP2A.

The protein localises to the cytoplasm. In terms of biological role, protein phosphatase inhibitor that specifically inhibits protein phosphatase 2A (PP2A) during mitosis. Inhibition of PP2A is enhanced when ARPP19 is phosphorylated. When phosphorylated at Ser-62 during mitosis, specifically interacts with PPP2R2D (PR55-delta) and inhibits its activity, leading to inactivation of PP2A, an essential condition to keep cyclin-B1-CDK1 activity high during M phase. The sequence is that of cAMP-regulated phosphoprotein 19 (ARPP19) from Taeniopygia guttata (Zebra finch).